Reading from the N-terminus, the 160-residue chain is UPF0262 protein Mmar10_1128 (160 aa).

This sequence belongs to the UPF0262 family.

The sequence is that of UPF0262 protein Mmar10_1128 from Maricaulis maris (strain MCS10) (Caulobacter maris).